A 160-amino-acid chain; its full sequence is SsrA-binding protein (160 aa).

The protein belongs to the SmpB family.

It localises to the cytoplasm. Functionally, required for rescue of stalled ribosomes mediated by trans-translation. Binds to transfer-messenger RNA (tmRNA), required for stable association of tmRNA with ribosomes. tmRNA and SmpB together mimic tRNA shape, replacing the anticodon stem-loop with SmpB. tmRNA is encoded by the ssrA gene; the 2 termini fold to resemble tRNA(Ala) and it encodes a 'tag peptide', a short internal open reading frame. During trans-translation Ala-aminoacylated tmRNA acts like a tRNA, entering the A-site of stalled ribosomes, displacing the stalled mRNA. The ribosome then switches to translate the ORF on the tmRNA; the nascent peptide is terminated with the 'tag peptide' encoded by the tmRNA and targeted for degradation. The ribosome is freed to recommence translation, which seems to be the essential function of trans-translation. The polypeptide is SsrA-binding protein (Pectobacterium carotovorum subsp. carotovorum (strain PC1)).